Here is a 456-residue protein sequence, read N- to C-terminus: Hydroxymethylglutaryl coenzyme A synthase (456 aa).

Ala-34 serves as a coordination point for (3S)-3-hydroxy-3-methylglutaryl-CoA. The active-site Proton donor/acceptor is Glu-85. Cys-119, Thr-161, Ser-211, His-258, Lys-267, Asn-335, and Ser-369 together coordinate (3S)-3-hydroxy-3-methylglutaryl-CoA. The active-site Acyl-thioester intermediate is Cys-119. The Proton donor/acceptor role is filled by His-258.

Belongs to the thiolase-like superfamily. HMG-CoA synthase family.

It catalyses the reaction acetoacetyl-CoA + acetyl-CoA + H2O = (3S)-3-hydroxy-3-methylglutaryl-CoA + CoA + H(+). Its function is as follows. HMG-CoA synthase; part of the gene cluster that mediates the biosynthesis of 1233A, a natural compound known as an inhibitor of HMG-CoA synthase in the mevalonate pathway and with antibacterial and antifungal activities. This enzyme condenses acetyl-CoA with acetoacetyl-CoA to form HMG-CoA, which is the substrate for HMG-CoA reductase. As part of the 1233A biosynthesis cluster, is involved in conferring self-resistance to 1233A. The chain is Hydroxymethylglutaryl coenzyme A synthase from Fusarium sp.